The primary structure comprises 406 residues: B3 domain-containing protein Os11g0197600 (406 aa).

A disordered region spans residues 1–20; the sequence is MVVREKQGGRMGKGKGKGKE. The TF-B3 1 DNA-binding region spans 30 to 123; the sequence is RSFFRVLLTL…QFSVTVFEPS (94 aa). Residues 199–245 are disordered; that stretch reads ESSRRKRAGASAGKSKVTSTSHNSTRGSSCSSDEDNSSSKSPNPPFL. Positions 214 to 225 are enriched in polar residues; that stretch reads KVTSTSHNSTRG. A DNA-binding region (TF-B3 2) is located at residues 298–393; the sequence is AVQIMMESYV…NIKVHIYRVV (96 aa).

It is found in the nucleus. The polypeptide is B3 domain-containing protein Os11g0197600 (Oryza sativa subsp. japonica (Rice)).